Consider the following 108-residue polypeptide: uncharacterized protein (108 aa).

The next 2 membrane-spanning stretches (helical) occupy residues 51-71 (VFAALFMAPTIQLSFCLFCFL) and 86-106 (PLSTGTVLLFGICCQVAKSLL).

The protein resides in the membrane. This is an uncharacterized protein from Saccharomyces cerevisiae (strain ATCC 204508 / S288c) (Baker's yeast).